Here is a 416-residue protein sequence, read N- to C-terminus: Nuclear hormone receptor family member nhr-67 (416 aa).

A DNA-binding region (nuclear receptor) is located at residues 18-98 (DVDCRVCEDH…IGMNKDAVQH (81 aa)). NR C4-type zinc fingers lie at residues 21–41 (CRVC…CDGC) and 57–86 (CKNK…LRKC). A disordered region spans residues 331-398 (KTETEEGEDI…SSRPRHSIRS (68 aa)). Positions 335 to 346 (EEGEDIEEEDDA) are enriched in acidic residues. Positions 377–390 (SSTQPSSASSPSSS) are enriched in low complexity.

It belongs to the nuclear hormone receptor family. In terms of tissue distribution, expressed in linker cell.

It localises to the nucleus. Orphan nuclear receptor that binds DNA containing an extended core motif half-site sequence 5'-AAGTCA-3'. In males, plays an essential role in the migration of the linker cell which guides gonad elongation during the L3 and L4 stages of larval development by negatively regulating the expression of netrin receptor unc-5 at the mid-L3 stage. Involved in the regulation of non-apoptotic cell death in the linker cell, acting upstream of or in parallel to transcription factor hsf-1. Represses hypoxia response genes, fmo-2 and acs-2, in both normoxic and hypoxic conditions, probably acting via repression of nuclear receptor nhr-49. The sequence is that of Nuclear hormone receptor family member nhr-67 (nhr-67) from Caenorhabditis elegans.